The primary structure comprises 456 residues: N(6)-adenosine-methyltransferase non-catalytic subunit METTL14 (456 aa).

The segment covering 39 to 51 (DEQREIAETRETS) has biased composition (basic and acidic residues). Residues 39–74 (DEQREIAETRETSRASYDTSATVSKRKMPEEGEADE) are disordered. Residues 52-61 (RASYDTSATV) show a composition bias toward polar residues. Interaction with METTL3 regions lie at residues 135-136 (RD) and 237-238 (SG). The interval 245-254 (RMCLRKWGFR) is positively charged region required for RNA-binding. Interaction with METTL3 stretches follow at residues 255-258 (RSED) and 278-287 (KAIFQRTKEH). Residues 297–298 (HR) are positively charged region required for RNA-binding. An interaction with METTL3 region spans residues 308-312 (NVDID). Positions 395 to 456 (LRPKTPPPKS…GPHRGVFAPR (62 aa)) are disordered. Residues 410–421 (ASRGGGRGGPSA) show a composition bias toward gly residues. A compositionally biased stretch (basic and acidic residues) spans 423–441 (RGERGRERNRGSFRGDRGN).

It belongs to the MT-A70-like family. In terms of assembly, heterodimer; heterodimerizes with mettl3 to form an antiparallel heterodimer that constitutes an active methyltransferase. Component of the WMM complex, a N6-methyltransferase complex composed of a catalytic subcomplex, named MAC, and of an associated subcomplex, named MACOM. The MAC subcomplex is composed of mettl3 and mettl14.

Its subcellular location is the nucleus. The METTL3-METTL14 heterodimer forms a N6-methyltransferase complex that methylates adenosine residues at the N(6) position of some mRNAs and regulates the circadian clock, differentiation of embryonic stem cells and cortical neurogenesis. In the heterodimer formed with mettl3, mettl14 constitutes the RNA-binding scaffold that recognizes the substrate rather than the catalytic core. N6-methyladenosine (m6A), which takes place at the 5'-[AG]GAC-3' consensus sites of some mRNAs, plays a role in mRNA stability and processing. This chain is N(6)-adenosine-methyltransferase non-catalytic subunit METTL14 (mettl14), found in Xenopus tropicalis (Western clawed frog).